Reading from the N-terminus, the 103-residue chain is Large ribosomal subunit protein bL21 (103 aa).

The protein belongs to the bacterial ribosomal protein bL21 family. As to quaternary structure, part of the 50S ribosomal subunit. Contacts protein L20.

This protein binds to 23S rRNA in the presence of protein L20. This is Large ribosomal subunit protein bL21 from Glaesserella parasuis serovar 5 (strain SH0165) (Haemophilus parasuis).